Consider the following 458-residue polypeptide: UDP-N-acetylmuramate--L-alanine ligase (458 aa).

118-124 (GTHGKTT) is an ATP binding site.

Belongs to the MurCDEF family.

It is found in the cytoplasm. The enzyme catalyses UDP-N-acetyl-alpha-D-muramate + L-alanine + ATP = UDP-N-acetyl-alpha-D-muramoyl-L-alanine + ADP + phosphate + H(+). It functions in the pathway cell wall biogenesis; peptidoglycan biosynthesis. Cell wall formation. This chain is UDP-N-acetylmuramate--L-alanine ligase, found in Clostridium botulinum (strain Okra / Type B1).